The primary structure comprises 208 residues: N-hydroxyputrescine acetyltransferase (208 aa).

Belongs to the IucB family.

The enzyme catalyses N-hydroxyputrescine + acetyl-CoA = N(1)-acetyl-N(1)-hydroxyputrescine + CoA. It functions in the pathway siderophore biosynthesis. Functionally, N-acetyltransferase involved in the biosynthesis of fimsbactin A, the major siderophore produced by A.baumannii. Catalyzes the acetylation of N-hydroxyputrescine to form N(1)-acetyl-N(1)-hydroxyputrescine (ahPutr). This Acinetobacter baumannii (strain ATCC 17978 / DSM 105126 / CIP 53.77 / LMG 1025 / NCDC KC755 / 5377) protein is N-hydroxyputrescine acetyltransferase.